We begin with the raw amino-acid sequence, 437 residues long: Protein arginine methyltransferase NDUFAF7 homolog, mitochondrial (437 aa).

Residues 21–49 are disordered; sequence RPNLGATGTPKMEPPKEQPEASSKAESGH.

Belongs to the NDUFAF7 family.

The protein localises to the mitochondrion. It carries out the reaction L-arginyl-[protein] + 2 S-adenosyl-L-methionine = N(omega),N(omega)'-dimethyl-L-arginyl-[protein] + 2 S-adenosyl-L-homocysteine + 2 H(+). Functionally, arginine methyltransferase involved in the assembly or stability of mitochondrial NADH:ubiquinone oxidoreductase complex (complex I). This Drosophila melanogaster (Fruit fly) protein is Protein arginine methyltransferase NDUFAF7 homolog, mitochondrial.